The chain runs to 262 residues: Small ribosomal subunit protein eS1 (262 aa).

This sequence belongs to the eukaryotic ribosomal protein eS1 family. As to quaternary structure, component of the small ribosomal subunit. Mature ribosomes consist of a small (40S) and a large (60S) subunit. The 40S subunit contains about 32 different proteins and 1 molecule of RNA (18S). The 60S subunit contains about 42 different proteins and 3 molecules of RNA (28S, 5.8S and 5S).

The protein resides in the cytoplasm. Functionally, component of the ribosome, a large ribonucleoprotein complex responsible for the synthesis of proteins in the cell. The small ribosomal subunit (SSU) binds messenger RNAs (mRNAs) and translates the encoded message by selecting cognate aminoacyl-transfer RNA (tRNA) molecules. The large subunit (LSU) contains the ribosomal catalytic site termed the peptidyl transferase center (PTC), which catalyzes the formation of peptide bonds, thereby polymerizing the amino acids delivered by tRNAs into a polypeptide chain. The nascent polypeptides leave the ribosome through a tunnel in the LSU and interact with protein factors that function in enzymatic processing, targeting, and the membrane insertion of nascent chains at the exit of the ribosomal tunnel. This is Small ribosomal subunit protein eS1 from Plasmodium falciparum (isolate 3D7).